A 204-amino-acid chain; its full sequence is Uridylate kinase (204 aa).

G26 to T31 provides a ligand contact to ATP. An NMP region spans residues S46–V76. A ribonucleoside 5'-phosphate is bound by residues R52, Q74 to V76, G104 to R107, and Q111. The segment at E141–D151 is LID. Position 142 (R142) interacts with ATP. A ribonucleoside 5'-phosphate contacts are provided by R148 and R159. R187 contributes to the ATP binding site.

Belongs to the adenylate kinase family. UMP-CMP kinase subfamily. As to quaternary structure, monomer. The cofactor is Mg(2+).

It localises to the cytoplasm. It is found in the nucleus. It carries out the reaction UMP + ATP = UDP + ADP. Functionally, catalyzes the phosphorylation of pyrimidine nucleoside monophosphates at the expense of ATP. Plays an important role in de novo pyrimidine nucleotide biosynthesis. Has preference for UMP and dUMP as phosphate acceptors, but can also use CMP, dCMP, AMP, GMP, dGMP and dTMP. ATP and dATP are the best phosphate donors, but can also use GTP, dGTP, dCTP, and dTTP to some degree. The chain is Uridylate kinase from Saccharomyces cerevisiae (strain ATCC 204508 / S288c) (Baker's yeast).